The primary structure comprises 572 residues: MSHAAEPARDAVEASAEGPRAVFLLLEERRPAESAQLLSLNSLLPESGIVADIELENILDPDSFYELKSQPLFLRSSLPISLQATPTTPATLSASSSAGGSRTPAMSSSSSRVLLRQQLMRAQAQEQERRERREQAAAAPFPSPAPASPAISVIGVSAGGHTLSRPPPAQVPREVLKVQTHLENPTRYHLQQARRQQVKQYLSTTLGPKLASQALTPPPGPSSAQPLPAPETAHATGPTGSAPNSPMALLTIGSSSEKEIDDVIDEIISLESSYNDEMLSYLPGGTAGLQLPSTLPVSGNLLDVYSSQGVATPAITVSNSCPAELPNIKREISETEAKALLKERQKKDNHNLIERRRRFNINDRIKELGTLIPKSNDPEMRWNKGTILKASVDYIRKLQKEQQRSKDLESRQRSLEQANRSLQLRIQELELQAQIHGLPVPPNPGLLSLTTSSVSDSLKPEQLDIEEEGRPSTTFHVSGGPAQNAPPQQPPAPPSDALLDLHFPSDHLGDLGDPFHLGLEDILMEEEGMVGGLSGGALSPLRAASDPLLSSVSPAVSKASSRRSSFSMEEES.

Position 47 is a phosphoserine; by MTOR (S47). The segment covering 87 to 125 has biased composition (low complexity); it reads TTPATLSASSSAGGSRTPAMSSSSSRVLLRQQLMRAQAQ. Residues 87-152 form a disordered region; the sequence is TTPATLSASS…SPAPASPAIS (66 aa). Basic and acidic residues predominate over residues 126–135; that stretch reads EQERRERREQ. Asymmetric dimethylarginine is present on R187. The tract at residues 210–248 is disordered; that stretch reads LASQALTPPPGPSSAQPLPAPETAHATGPTGSAPNSPMA. A strong transcription activation domain region spans residues 259–270; that stretch reads EIDDVIDEIISL. The residue at position 320 (S320) is a Phosphoserine; by MTOR. Residue K338 forms a Glycyl lysine isopeptide (Lys-Gly) (interchain with G-Cter in SUMO2) linkage. The region spanning 345–398 is the bHLH domain; that stretch reads QKKDNHNLIERRRRFNINDRIKELGTLIPKSNDPEMRWNKGTILKASVDYIRKL. Positions 355-358 match the Nuclear localization signal motif; sequence RRRR. The tract at residues 408-429 is leucine-zipper; the sequence is LESRQRSLEQANRSLQLRIQEL. Disordered stretches follow at residues 439–495 and 530–572; these read PVPP…APPS and VGGL…EEES. Residues 446 to 457 are compositionally biased toward low complexity; it reads LLSLTTSSVSDS. Phosphoserine is present on residues S539, S545, S551, S553, S557, and S565. Positions 543–572 are enriched in low complexity; that stretch reads AASDPLLSSVSPAVSKASSRRSSFSMEEES.

This sequence belongs to the MiT/TFE family. As to quaternary structure, homodimer and heterodimer; with TFEB or MITF. Interacts with RRAGC/RagC GDP-bound and RRAGD/RagD GDP-bound; promoting its recruitment to lysosomal membrane in the presence of nutrients. Interacts with TSC22D1; the interaction is enhanced in the presence of TGF-beta. Sumoylated; does not affect dimerization with MITF. Post-translationally, phosphorylation ar Ser-47 and Ser-320 by MTOR via non-canonical mTORC1 pathway regulates its stability and subcellular location, respectively. When nutrients are present, phosphorylation by MTOR at Ser-47 promotes ubiquitination by the SCF(BTRC) complex, followed by degradation. When nutrients are present, phosphorylation by MTOR at Ser-320 also promotes association with 14-3-3/YWHA adapters and retention in the cytosol. Phosphorylation at Ser-47 plays a more critical role than phosphorylation at Ser-320 for TFE3 inactivation. Inhibition of mTORC1, starvation and lysosomal disruption, promotes dephosphorylation and transcription factor activity. In terms of processing, ubiquitinated by the SCF(BTRC) and SCF(FBXW11) complexes following phosphorylation at Ser-47 by MTOR, leading to its degradation by the proteasome. As to expression, widely expressed.

The protein localises to the cytoplasm. Its subcellular location is the cytosol. The protein resides in the nucleus. It is found in the lysosome membrane. Transcription factor that acts as a master regulator of lysosomal biogenesis and immune response. Specifically recognizes and binds E-box sequences (5'-CANNTG-3'); efficient DNA-binding requires dimerization with itself or with another MiT/TFE family member such as TFEB or MITF. Involved in the cellular response to amino acid availability by acting downstream of MTOR: in the presence of nutrients, TFE3 phosphorylation by MTOR promotes its inactivation. Upon starvation or lysosomal stress, inhibition of MTOR induces TFE3 dephosphorylation, resulting in transcription factor activity. Specifically recognizes and binds the CLEAR-box sequence (5'-GTCACGTGAC-3') present in the regulatory region of many lysosomal genes, leading to activate their expression, thereby playing a central role in expression of lysosomal genes. Maintains the pluripotent state of embryonic stem cells by promoting the expression of genes such as ESRRB; mTOR-dependent TFE3 cytosolic retention and inactivation promotes exit from pluripotency. Required to maintain the naive pluripotent state of hematopoietic stem cell; mTOR-dependent cytoplasmic retention of TFE3 promotes the exit of hematopoietic stem cell from pluripotency. TFE3 activity is also involved in the inhibition of neuronal progenitor differentiation. Acts as a positive regulator of browning of adipose tissue by promoting expression of target genes; mTOR-dependent phosphorylation promotes cytoplasmic retention of TFE3 and inhibits browning of adipose tissue. In association with TFEB, activates the expression of CD40L in T-cells, thereby playing a role in T-cell-dependent antibody responses in activated CD4(+) T-cells and thymus-dependent humoral immunity. Specifically recognizes the MUE3 box, a subset of E-boxes, present in the immunoglobulin enhancer. It also binds very well to a USF/MLTF site. Promotes TGF-beta-induced transcription of COL1A2; via its interaction with TSC22D1 at E-boxes in the gene proximal promoter. May regulate lysosomal positioning in response to nutrient deprivation by promoting the expression of PIP4P1. This is Transcription factor E3 from Mus musculus (Mouse).